A 217-amino-acid chain; its full sequence is Photosynthetic NDH subunit of lumenal location 4, chloroplastic (217 aa).

Residues 1–34 (MAISTLTLTQSLYTRSFRPTIFFSSSSSSSFSCL) constitute a chloroplast transit peptide. Disulfide bonds link cysteine 87-cysteine 99 and cysteine 188-cysteine 193. Positions 112-211 (GVLVNIHYTA…LYDINFVEIY (100 aa)) constitute a PPIase FKBP-type domain.

The protein belongs to the FKBP-type PPIase family. As to quaternary structure, part of the chloroplast NDH complex, composed of a mixture of chloroplast and nucleus encoded subunits. Component of the NDH lumenal subcomplex, at least composed of PnsL1, PnsL2, PnsL3, PnsL4 and PnsL5.

It is found in the plastid. The protein localises to the chloroplast thylakoid lumen. It carries out the reaction [protein]-peptidylproline (omega=180) = [protein]-peptidylproline (omega=0). In terms of biological role, NDH shuttles electrons from NAD(P)H:plastoquinone, via FMN and iron-sulfur (Fe-S) centers, to quinones in the photosynthetic chain and possibly in a chloroplast respiratory chain. The immediate electron acceptor for the enzyme in this species is believed to be plastoquinone. Couples the redox reaction to proton translocation, and thus conserves the redox energy in a proton gradient. PPIases accelerate the folding of proteins. It catalyzes the cis-trans isomerization of proline imidic peptide bonds in oligopeptides. Seems to be essential for stabilizing the NDH subcomplex A. This is Photosynthetic NDH subunit of lumenal location 4, chloroplastic from Arabidopsis thaliana (Mouse-ear cress).